The sequence spans 122 residues: Large ribosomal subunit protein uL14 (122 aa).

The protein belongs to the universal ribosomal protein uL14 family. As to quaternary structure, part of the 50S ribosomal subunit. Forms a cluster with proteins L3 and L19. In the 70S ribosome, L14 and L19 interact and together make contacts with the 16S rRNA in bridges B5 and B8.

Binds to 23S rRNA. Forms part of two intersubunit bridges in the 70S ribosome. The sequence is that of Large ribosomal subunit protein uL14 from Nitrosomonas eutropha (strain DSM 101675 / C91 / Nm57).